Consider the following 407-residue polypeptide: Methylthioribose kinase (407 aa).

Residues Asn-40, Lys-57, and 111–113 contribute to the ATP site; that span reads EDL. Asp-229 is a substrate binding site. ATP is bound at residue 246–248; sequence DAE. Arg-344 contributes to the substrate binding site.

This sequence belongs to the methylthioribose kinase family. Homodimer.

It carries out the reaction 5-(methylsulfanyl)-D-ribose + ATP = 5-(methylsulfanyl)-alpha-D-ribose 1-phosphate + ADP + H(+). It participates in amino-acid biosynthesis; L-methionine biosynthesis via salvage pathway; S-methyl-5-thio-alpha-D-ribose 1-phosphate from S-methyl-5'-thioadenosine (hydrolase route): step 2/2. In terms of biological role, catalyzes the phosphorylation of methylthioribose into methylthioribose-1-phosphate. The polypeptide is Methylthioribose kinase (Yersinia pseudotuberculosis serotype O:1b (strain IP 31758)).